The sequence spans 1036 residues: Nitrogen catabolic enzyme regulatory protein (1036 aa).

Residues 1 to 17 (MAASTTTPTATTRPFFT) show a composition bias toward low complexity. Disordered stretches follow at residues 1–126 (MAAS…HTQS), 207–240 (TDRT…SQGS), 256–298 (TPAG…QSQH), 318–351 (GYLP…HVSA), 590–743 (SSQG…PTTC), 792–976 (RGSG…PTTQ), and 1000–1028 (GMPN…TGAE). Residues 23-34 (TEHDFRFPRRPG) show a composition bias toward basic and acidic residues. Over residues 45–56 (AAMSSSSANNNH) the composition is skewed to low complexity. A run of 3 repeats spans residues 49–55 (SSSANNN), 87–92 (SSSNNN), and 105–110 (SSSNNN). Residues 49–110 (SSSANNNHNQ…INHQSSSNNN (62 aa)) form a 3 X approximate repeats region. The segment covering 100–114 (NINHQSSSNNNISKN) has biased composition (low complexity). A compositionally biased stretch (polar residues) spans 652–661 (PRSQSQSFRQ). Residues 703-714 (SSGLSSVPASRP) show a composition bias toward low complexity. Residues 723-736 (QGSTTNLQGAAGNS) are compositionally biased toward polar residues. The segment at 743 to 767 (CTNCFTQTTPLWRRNPDGQPLCNAC) adopts a GATA-type zinc-finger fold. Over residues 802 to 827 (GTSTRSKKNASMSAAARKNSTLSITS) the composition is skewed to polar residues. Composition is skewed to low complexity over residues 828-861 (NANN…ASGP) and 868-899 (AGST…SAPP). The span at 927-961 (SAGSDQPVSAGAVSSSGMDVDSPANSTGSNETMPT) shows a compositional bias: polar residues. Positions 1000–1023 (GMPNGQAGQMMGASSSSGPGSGPS) are enriched in low complexity.

As to quaternary structure, interacts with nmr.

The protein localises to the nucleus. In terms of biological role, major nitrogen regulatory protein. During conditions of nitrogen limitation it turns on the expression of genes for enzymes which are required for the use of a variety of secondary nitrogen sources, including nitrates, purines, amino acids, and proteins. The chain is Nitrogen catabolic enzyme regulatory protein (nit-2) from Neurospora crassa (strain ATCC 24698 / 74-OR23-1A / CBS 708.71 / DSM 1257 / FGSC 987).